The primary structure comprises 323 residues: Transaldolase (323 aa).

Lys131 functions as the Schiff-base intermediate with substrate in the catalytic mechanism.

Belongs to the transaldolase family. Type 1 subfamily. As to quaternary structure, homodimer.

The protein resides in the cytoplasm. It catalyses the reaction D-sedoheptulose 7-phosphate + D-glyceraldehyde 3-phosphate = D-erythrose 4-phosphate + beta-D-fructose 6-phosphate. Its pathway is carbohydrate degradation; pentose phosphate pathway; D-glyceraldehyde 3-phosphate and beta-D-fructose 6-phosphate from D-ribose 5-phosphate and D-xylulose 5-phosphate (non-oxidative stage): step 2/3. Its function is as follows. Transaldolase is important for the balance of metabolites in the pentose-phosphate pathway. The protein is Transaldolase of Blochmanniella floridana.